A 30-amino-acid chain; its full sequence is Cyclotide mden-G (30 aa).

The segment at residues 1–30 (GIPCAESCVYIPCITAALGCSCKNKVCYRN) is a cross-link (cyclopeptide (Gly-Asn)). 3 cysteine pairs are disulfide-bonded: C4-C20, C8-C22, and C13-C27.

Belongs to the cyclotide family. Bracelet subfamily. In terms of processing, this is a cyclic peptide.

Functionally, probably participates in a plant defense mechanism. In Melicytus dentatus (Tree violet), this protein is Cyclotide mden-G.